Here is a 144-residue protein sequence, read N- to C-terminus: Probable 4-amino-4-deoxy-L-arabinose-phosphoundecaprenol flippase subunit ArnF (144 aa).

Residues 1-6 (MTHRRA) are Cytoplasmic-facing. Residues 7-24 (TLCAMASVALVSAAQLGM) traverse the membrane as a helical segment. The Periplasmic segment spans residues 25 to 56 (RWSMSRLPSPVQWLEMQEHAQLDLSALRVVCA). The chain crosses the membrane as a helical span at residues 57 to 77 (SITAYALSMLFWLLALRVLPL). Residues 78 to 80 (SRA) lie on the Cytoplasmic side of the membrane. The helical transmembrane segment at 81–101 (YSLLSISYALVYTLAATLPFF) threads the bilayer. At 102-104 (HET) the chain is on the periplasmic side. Residues 105-125 (FTVSKTVGVSLIVAGVLTINL) traverse the membrane as a helical segment. The Cytoplasmic segment spans residues 126–144 (RRLPRPSPQDLSHENQRFR).

Belongs to the ArnF family. Heterodimer of ArnE and ArnF.

Its subcellular location is the cell inner membrane. Its pathway is bacterial outer membrane biogenesis; lipopolysaccharide biosynthesis. Its function is as follows. Translocates 4-amino-4-deoxy-L-arabinose-phosphoundecaprenol (alpha-L-Ara4N-phosphoundecaprenol) from the cytoplasmic to the periplasmic side of the inner membrane. This chain is Probable 4-amino-4-deoxy-L-arabinose-phosphoundecaprenol flippase subunit ArnF, found in Pseudomonas syringae pv. syringae (strain B728a).